A 202-amino-acid chain; its full sequence is Outer-membrane lipoprotein LolB (202 aa).

Positions 1–18 are cleaved as a signal peptide; the sequence is MFRRTYFWLMLLPLFMVG. Cys-19 is lipidated: N-palmitoyl cysteine. A lipid anchor (S-diacylglycerol cysteine) is attached at Cys-19.

It belongs to the LolB family. In terms of assembly, monomer.

The protein resides in the cell outer membrane. Plays a critical role in the incorporation of lipoproteins in the outer membrane after they are released by the LolA protein. The chain is Outer-membrane lipoprotein LolB from Vibrio vulnificus (strain YJ016).